The sequence spans 439 residues: ATP-dependent protease ATPase subunit HslU (439 aa).

Residues Ile-17, 59-64 (GVGKTE), Asp-251, Glu-317, and Arg-389 each bind ATP.

The protein belongs to the ClpX chaperone family. HslU subfamily. A double ring-shaped homohexamer of HslV is capped on each side by a ring-shaped HslU homohexamer. The assembly of the HslU/HslV complex is dependent on binding of ATP.

The protein resides in the cytoplasm. Functionally, ATPase subunit of a proteasome-like degradation complex; this subunit has chaperone activity. The binding of ATP and its subsequent hydrolysis by HslU are essential for unfolding of protein substrates subsequently hydrolyzed by HslV. HslU recognizes the N-terminal part of its protein substrates and unfolds these before they are guided to HslV for hydrolysis. The polypeptide is ATP-dependent protease ATPase subunit HslU (Campylobacter jejuni subsp. jejuni serotype O:6 (strain 81116 / NCTC 11828)).